The primary structure comprises 275 residues: Aldo-keto reductase MSMEG_2408/MSMEI_2347 (275 aa).

Tyr49 serves as the catalytic Proton donor. The NADPH site is built by Leu189, Ile227, Lys229, Ser230, Val231, Arg235, Ser238, and Asn239. Lys262 is covalently cross-linked (Isoglutamyl lysine isopeptide (Lys-Gln) (interchain with Q-Cter in protein Pup)).

The protein belongs to the aldo/keto reductase family.

In Mycolicibacterium smegmatis (strain ATCC 700084 / mc(2)155) (Mycobacterium smegmatis), this protein is Aldo-keto reductase MSMEG_2408/MSMEI_2347.